Here is a 38-residue protein sequence, read N- to C-terminus: Photosystem II reaction center protein L (38 aa).

A helical transmembrane segment spans residues serine 17–phenylalanine 37.

This sequence belongs to the PsbL family. As to quaternary structure, PSII is composed of 1 copy each of membrane proteins PsbA, PsbB, PsbC, PsbD, PsbE, PsbF, PsbH, PsbI, PsbJ, PsbK, PsbL, PsbM, PsbT, PsbX, PsbY, PsbZ, Psb30/Ycf12, at least 3 peripheral proteins of the oxygen-evolving complex and a large number of cofactors. It forms dimeric complexes.

The protein localises to the plastid. It is found in the chloroplast thylakoid membrane. One of the components of the core complex of photosystem II (PSII). PSII is a light-driven water:plastoquinone oxidoreductase that uses light energy to abstract electrons from H(2)O, generating O(2) and a proton gradient subsequently used for ATP formation. It consists of a core antenna complex that captures photons, and an electron transfer chain that converts photonic excitation into a charge separation. This subunit is found at the monomer-monomer interface and is required for correct PSII assembly and/or dimerization. This chain is Photosystem II reaction center protein L, found in Chaetosphaeridium globosum (Charophycean green alga).